The sequence spans 216 residues: Cell division protein SepF (216 aa).

The disordered stretch occupies residues 22 to 126 (EYVEEPDQAR…PVVDDGGPLA (105 aa)). Basic and acidic residues-rich tracts occupy residues 28 to 50 (DQAR…REFV), 62 to 80 (SRRD…RPRV), and 106 to 118 (ARAE…RAPV).

This sequence belongs to the SepF family. As to quaternary structure, homodimer. Interacts with FtsZ.

It is found in the cytoplasm. In terms of biological role, cell division protein that is part of the divisome complex and is recruited early to the Z-ring. Probably stimulates Z-ring formation, perhaps through the cross-linking of FtsZ protofilaments. Its function overlaps with FtsA. This Rhodococcus erythropolis (strain PR4 / NBRC 100887) protein is Cell division protein SepF.